Reading from the N-terminus, the 292-residue chain is NAD kinase (292 aa).

D72 serves as the catalytic Proton acceptor. Residues 72 to 73 (DG), 146 to 147 (NE), H157, R174, D176, and 187 to 192 (TAYSLS) contribute to the NAD(+) site.

It belongs to the NAD kinase family. It depends on a divalent metal cation as a cofactor.

The protein localises to the cytoplasm. It carries out the reaction NAD(+) + ATP = ADP + NADP(+) + H(+). Functionally, involved in the regulation of the intracellular balance of NAD and NADP, and is a key enzyme in the biosynthesis of NADP. Catalyzes specifically the phosphorylation on 2'-hydroxyl of the adenosine moiety of NAD to yield NADP. The polypeptide is NAD kinase (Shewanella loihica (strain ATCC BAA-1088 / PV-4)).